The chain runs to 249 residues: MSEHPRDTPQFYLTAPSPCPYLPGREERKVFTHLVGDKAASLNDVLTQGGFRRSQSIAYRPACEGCKACVSVRICVDDFTPGRSFRRVQADNSDLIGQIKPATPTSEQYALFRSYVTGRHGTGGMADMSVLDYAMMVEDTHVHTRLVEYRKRGPDSRIIPRGTGDLMAVALTDVLTDGLSMVYSFYNPQVHDRSLGTFLILDHITRARQMGLPYVYLGYWVQGSRKMDYKRRYLPQERLTPHGWERVEK.

The protein belongs to the R-transferase family. Bpt subfamily.

It localises to the cytoplasm. It carries out the reaction N-terminal L-glutamyl-[protein] + L-leucyl-tRNA(Leu) = N-terminal L-leucyl-L-glutamyl-[protein] + tRNA(Leu) + H(+). It catalyses the reaction N-terminal L-aspartyl-[protein] + L-leucyl-tRNA(Leu) = N-terminal L-leucyl-L-aspartyl-[protein] + tRNA(Leu) + H(+). Functionally, functions in the N-end rule pathway of protein degradation where it conjugates Leu from its aminoacyl-tRNA to the N-termini of proteins containing an N-terminal aspartate or glutamate. The protein is Aspartate/glutamate leucyltransferase of Xanthobacter autotrophicus (strain ATCC BAA-1158 / Py2).